The sequence spans 313 residues: tRNA dimethylallyltransferase (313 aa).

13-20 (GPTASGKT) provides a ligand contact to ATP. 15 to 20 (TASGKT) is a substrate binding site. Interaction with substrate tRNA regions lie at residues 38–41 (DSAL), 162–166 (QRLSR), 243–248 (RCVGYR), and 276–283 (KRQITWLR).

It belongs to the IPP transferase family. In terms of assembly, monomer. Mg(2+) is required as a cofactor.

It carries out the reaction adenosine(37) in tRNA + dimethylallyl diphosphate = N(6)-dimethylallyladenosine(37) in tRNA + diphosphate. Catalyzes the transfer of a dimethylallyl group onto the adenine at position 37 in tRNAs that read codons beginning with uridine, leading to the formation of N6-(dimethylallyl)adenosine (i(6)A). The sequence is that of tRNA dimethylallyltransferase from Aliivibrio salmonicida (strain LFI1238) (Vibrio salmonicida (strain LFI1238)).